A 413-amino-acid chain; its full sequence is Cyclic AMP-dependent transcription factor ATF-7 (413 aa).

The segment at 1 to 285 (MGDDRPFVCS…GMVVGTASTM (285 aa)) is transactivation domain. Residues 7–31 (FVCSAPGCGQRFTNEDHLAVHKHKH) form a C2H2-type zinc finger. Residue Thr51 is modified to Phosphothreonine; by MAPK11. Thr53 and Thr101 each carry phosphothreonine. Disordered stretches follow at residues 81–140 (ASDD…TTKP) and 299–337 (HPDA…RRQR). Lys107 participates in a covalent cross-link: Glycyl lysine isopeptide (Lys-Gly) (interchain with G-Cter in SUMO1). Low complexity-rich tracts occupy residues 114–126 (VDSS…ASSP) and 307–320 (QPQV…PSTG). Over residues 326 to 337 (TVDEDPDERRQR) the composition is skewed to basic and acidic residues. Residues 332-395 (DERRQRFLER…AQLKQLLLAH (64 aa)) enclose the bZIP domain. The segment at 334–354 (RRQRFLERNRAAASRCRQKRK) is basic motif. The leucine-zipper stretch occupies residues 360–388 (LEKKAEELTSQNIQLSNEVTLLRNEVAQL).

The protein belongs to the bZIP family. As to quaternary structure, homodimer; binds DNA as homodimer. Heterodimer; heterodimerizes with other members of ATF family and with JUN family members. Interacts with JNK2; the interaction does not phosphorylate ATF7 but acts as a docking site for other ATF-associated partners such as JUN family members. Interacts (via its transactivation domain) with TAF12 the interaction potentiates the transactivation activity and is inhibited by ATF7 sumoylation. Interacts with TAF4; the interaction inhibits the TAF12-dependent transactivation. Interacts with MAPK9; the interaction does not phosphorylate ATF7 but acts as a docking site for ATF7-associated partners such as JUN. Interacts with Ku complex components XRCC6 and XRCC7. Interacts with TERT. On EGF stimulation, phosphorylated first on Thr-53 allowing subsequent phosphorylation on Thr-51. This latter phosphorylation prevents sumoylation, increases binding to TAF12 and enhances transcriptional activity. Social isolation stress as well as TNF-alpha also induce the phosphorylation of ATF7. Phosphorylated in proliferating colonic and small intestinal epithelial cells. Post-translationally, sumoylation delays nuclear localization and inhibits transactivation activity through preventing binding to TAF12. RANBP2 appears to be the specific E3 ligase.

Its subcellular location is the nucleus. It is found in the nucleoplasm. The protein resides in the chromosome. It localises to the telomere. Stress-responsive chromatin regulator that plays a role in various biological processes including innate immunological memory, adipocyte differentiation or telomerase regulation. In absence of stress, contributes to the formation of heterochromatin and heterochromatin-like structure by recruiting histone H3K9 tri- and di-methyltransferases thus silencing the transcription of target genes such as Htr5b, STAT1 in adipocytes, or genes involved in innate immunity in macrophages and adipocytes. Phosphorylation of ATF7 disrupts interactions with histone methyltransferase and enhances the association with coactivators containing histone acetyltransferase and/or histone demethylase, leading to disruption of the heterochromatin-like structure and subsequently transcriptional activation. In response to TNF-alpha, which is induced by various stresses, phosphorylated ATF7 and telomerase are released from telomeres leading to telomere shortening. Also plays a role in maintaining epithelial regenerative capacity and protecting against cell death during intestinal epithelial damage and repair. The polypeptide is Cyclic AMP-dependent transcription factor ATF-7 (Atf7) (Mus musculus (Mouse)).